Consider the following 355-residue polypeptide: Tetraacyldisaccharide 4'-kinase (355 aa).

An ATP-binding site is contributed by 49–56 (TAGGTGKT).

The protein belongs to the LpxK family.

It catalyses the reaction a lipid A disaccharide + ATP = a lipid IVA + ADP + H(+). It participates in glycolipid biosynthesis; lipid IV(A) biosynthesis; lipid IV(A) from (3R)-3-hydroxytetradecanoyl-[acyl-carrier-protein] and UDP-N-acetyl-alpha-D-glucosamine: step 6/6. Its function is as follows. Transfers the gamma-phosphate of ATP to the 4'-position of a tetraacyldisaccharide 1-phosphate intermediate (termed DS-1-P) to form tetraacyldisaccharide 1,4'-bis-phosphate (lipid IVA). The polypeptide is Tetraacyldisaccharide 4'-kinase (Chlorobium luteolum (strain DSM 273 / BCRC 81028 / 2530) (Pelodictyon luteolum)).